The sequence spans 258 residues: Flagellar brake protein YcgR (258 aa).

The PilZ domain maps to 131–248 (QKREYYRVAT…ALSLIQRYIT (118 aa)).

It belongs to the YcgR family. Monomer. Interacts with the flagellar basal bodies.

It is found in the bacterial flagellum basal body. In terms of biological role, acts as a flagellar brake, regulating swimming and swarming in a bis-(3'-5') cyclic diguanylic acid (c-di-GMP)-dependent manner. Binds 1 c-di-GMP dimer per subunit. Increasing levels of c-di-GMP lead to decreased motility. The sequence is that of Flagellar brake protein YcgR from Nitrosospira multiformis (strain ATCC 25196 / NCIMB 11849 / C 71).